The chain runs to 169 residues: Large ribosomal subunit protein uL10 (169 aa).

It belongs to the universal ribosomal protein uL10 family. As to quaternary structure, part of the ribosomal stalk of the 50S ribosomal subunit. The N-terminus interacts with L11 and the large rRNA to form the base of the stalk. The C-terminus forms an elongated spine to which L12 dimers bind in a sequential fashion forming a multimeric L10(L12)X complex.

In terms of biological role, forms part of the ribosomal stalk, playing a central role in the interaction of the ribosome with GTP-bound translation factors. The sequence is that of Large ribosomal subunit protein uL10 from Rickettsia akari (strain Hartford).